The chain runs to 101 residues: MMPTLNEDQRKALFAEVPGWTLQSERDAIQKTFTFADFNAAFGFMTRVAIKAEQMNHHPEWFNVWNRVDITLSTHDANGLTHRDADLARFIEQAAKGTGAK.

The protein belongs to the pterin-4-alpha-carbinolamine dehydratase family.

It catalyses the reaction (4aS,6R)-4a-hydroxy-L-erythro-5,6,7,8-tetrahydrobiopterin = (6R)-L-erythro-6,7-dihydrobiopterin + H2O. This chain is Putative pterin-4-alpha-carbinolamine dehydratase, found in Ralstonia pickettii (strain 12J).